The chain runs to 79 residues: Conotoxin Vi6.3 (79 aa).

A signal peptide spans M1–A22. A propeptide spanning residues D23–R47 is cleaved from the precursor. 3 cysteine pairs are disulfide-bonded: C49/C62, C56/C67, and C61/C77. P60 and P63 each carry 4-hydroxyproline.

This sequence belongs to the conotoxin O1 superfamily. In terms of tissue distribution, expressed by the venom duct.

The protein resides in the secreted. Ion channel inhibitor that inhibits the increase in intracellular calcium upon depolarization in DRG neurons. In vivo, both intraperitoneal and intracranial injections into mice induce hyperactivity. The polypeptide is Conotoxin Vi6.3 (Conus virgo (Virgin cone)).